A 513-amino-acid chain; its full sequence is MTTQLPAYVAILLFYVSRASCQDTFTAAVYEHAAILPNATLTPVSREEALALMNRNLDILEGAITSAADQGAHIIVTPEDAIYGWNFNRDSLYPYLEDIPDPEVNWIPCNNRNRFGQTPVQERLSCLAKNNSIYVVANIGDKKPCDTSDPQCPPDGRYQYNTDVVFDSQGKLVARYHKQNLFMGENQFNVPKEPEIVTFNTTFGSFGIFTCFDILFHDPAVTLVKDFHVDTIVFPTAWMNVLPHLSAVEFHSAWAMGMRVNFLASNIHYPSKKMTGSGIYAPNSSRAFHYDMKTEEGKLLLSQLDSHPSHSAVVNWTSYASSIEALSSGNKEFKGTVFFDEFTFVKLTGVAGNYTVCQKDLCCHLSYKMSENIPNEVYALGAFDGLHTVEGRYYLQICTLLKCKTTNLNTCGDSAETASTRFEMFSLSGTFGTQYVFPEVLLSENQLAPGEFQVSTDGRLFSLKPTSGPVLTVTLFGRLYEKDWASNASSGLTAQARIIMLIVIAPIVCSLSW.

The first 21 residues, 1–21, serve as a signal peptide directing secretion; sequence MTTQLPAYVAILLFYVSRASC. The N-linked (GlcNAc...) asparagine glycan is linked to Asn-38. Residues 39 to 306 enclose the CN hydrolase domain; it reads ATLTPVSREE…GKLLLSQLDS (268 aa). Glu-79 (proton acceptor) is an active-site residue. A glycan (N-linked (GlcNAc...) asparagine) is linked at Asn-130. Lys-178 acts as the Proton donor in catalysis. Residue Asn-200 is glycosylated (N-linked (GlcNAc...) asparagine). Residue Cys-211 is the Nucleophile of the active site. 3 N-linked (GlcNAc...) asparagine glycosylation sites follow: Asn-283, Asn-315, and Asn-353. Gly-491 carries the GPI-anchor amidated glycine lipid modification. A propeptide spans 492–513 (removed in mature form); it reads LTAQARIIMLIVIAPIVCSLSW.

This sequence belongs to the carbon-nitrogen hydrolase superfamily. BTD/VNN family. As to quaternary structure, monomer. In terms of tissue distribution, widely expressed with higher expression in spleen, kidney and blood. Overexpressed in lesional psoriatic skin.

It is found in the cell membrane. It catalyses the reaction (R)-pantetheine + H2O = cysteamine + (R)-pantothenate. Its function is as follows. Amidohydrolase that hydrolyzes specifically one of the carboamide linkages in D-pantetheine thus recycling pantothenic acid (vitamin B5) and releasing cysteamine. This Homo sapiens (Human) protein is Pantetheinase (VNN1).